Here is a 1152-residue protein sequence, read N- to C-terminus: DNA-directed RNA polymerase subunit beta (1152 aa).

The protein belongs to the RNA polymerase beta chain family. In terms of assembly, the RNAP catalytic core consists of 2 alpha, 1 beta, 1 beta' and 1 omega subunit. When a sigma factor is associated with the core the holoenzyme is formed, which can initiate transcription.

The enzyme catalyses RNA(n) + a ribonucleoside 5'-triphosphate = RNA(n+1) + diphosphate. In terms of biological role, DNA-dependent RNA polymerase catalyzes the transcription of DNA into RNA using the four ribonucleoside triphosphates as substrates. The sequence is that of DNA-directed RNA polymerase subunit beta from Deinococcus geothermalis (strain DSM 11300 / CIP 105573 / AG-3a).